Reading from the N-terminus, the 195-residue chain is NADH-quinone oxidoreductase subunit I (195 aa).

4Fe-4S ferredoxin-type domains lie at 44–74 (LNRY…VEGA) and 90–119 (QVYQ…MTNE). 8 residues coordinate [4Fe-4S] cluster: Cys-54, Cys-57, Cys-60, Cys-64, Cys-99, Cys-102, Cys-105, and Cys-109. Residues 145-195 (MTAPPHALRPGTTQDDYYRGDITAVPEQAAPEQAAPEQPAPEREPNPETEK) are disordered. Residues 168 to 181 (AVPEQAAPEQAAPE) show a composition bias toward low complexity. Positions 184–195 (APEREPNPETEK) are enriched in basic and acidic residues.

Belongs to the complex I 23 kDa subunit family. In terms of assembly, NDH-1 is composed of 14 different subunits. Subunits NuoA, H, J, K, L, M, N constitute the membrane sector of the complex. [4Fe-4S] cluster serves as cofactor.

The protein resides in the cell membrane. The enzyme catalyses a quinone + NADH + 5 H(+)(in) = a quinol + NAD(+) + 4 H(+)(out). NDH-1 shuttles electrons from NADH, via FMN and iron-sulfur (Fe-S) centers, to quinones in the respiratory chain. The immediate electron acceptor for the enzyme in this species is believed to be ubiquinone. Couples the redox reaction to proton translocation (for every two electrons transferred, four hydrogen ions are translocated across the cytoplasmic membrane), and thus conserves the redox energy in a proton gradient. This Rhodococcus erythropolis (strain PR4 / NBRC 100887) protein is NADH-quinone oxidoreductase subunit I.